A 97-amino-acid polypeptide reads, in one-letter code: MSMFGLFTCLSIYFSGVYVFCSKRKHLLVVLLSLEYIVLSLFMLIVLFLVEFDYDYFFPVIFLVFSVCEGALGLSILVSMIRSHGNDFFNSFFLSLC.

3 helical membrane passes run 1 to 21 (MSMFGLFTCLSIYFSGVYVFC), 28 to 48 (LVVLLSLEYIVLSLFMLIVLF), and 57 to 77 (FFPVIFLVFSVCEGALGLSIL).

This sequence belongs to the complex I subunit 4L family.

It is found in the mitochondrion membrane. The catalysed reaction is a ubiquinone + NADH + 5 H(+)(in) = a ubiquinol + NAD(+) + 4 H(+)(out). Functionally, core subunit of the mitochondrial membrane respiratory chain NADH dehydrogenase (Complex I) that is believed to belong to the minimal assembly required for catalysis. Complex I functions in the transfer of electrons from NADH to the respiratory chain. The immediate electron acceptor for the enzyme is believed to be ubiquinone. The polypeptide is NADH-ubiquinone oxidoreductase chain 4L (ND4L) (Locusta migratoria (Migratory locust)).